Consider the following 312-residue polypeptide: Fasciclin-like arabinogalactan protein elcF (312 aa).

The signal sequence occupies residues 1 to 16; that stretch reads MKLFTLLLPALTSAHS. FAS1 domains follow at residues 17 to 160 and 162 to 289; these read LSTL…NASM and LPHN…DKVL. 5 N-linked (GlcNAc...) asparagine glycosylation sites follow: Asn-48, Asn-68, Asn-113, Asn-157, and Asn-165.

This sequence belongs to the fasciclin-like AGP family.

The protein operates within secondary metabolite biosynthesis. Fasciclin-like arabinogalactan protein; part of the gene cluster that mediates the biosynthesis of elsinochrome C, a perelyenequinone phytotoxin structurally similar to cercosporin. The first step of elsinochrome C biosynthesis is performed by the polyketide synthase elcA which catalyzes the formation of nor-toralactone. The starter unit acyltransferase (SAT) domain of elcA initiates polyketide extension by the selective utilization of acetyl-CoA, which is elongated to the heptaketide in the beta-ketoacyl synthase (KS) domain by successive condensations with six malonyl units introduced by the malonyl acyltransferase (MAT) domain. The product template (PT) domain catalyzes C4-C9 and C2-C11 aldol cyclizations and dehydrations to a trihydroxynaphthalene, which is thought to be delivered to the thioesterase (TE) domain for product release. The bifunctional enzyme elcB then methylates nor-toralactone to toralactone before conducting an unusual oxidative aromatic ring opening. The next step in perylenequinone biosynthesis is an O-methylation at the nascent OH-6 of the elcB product performed by the O-methyltransferase elcD. The oxidative coupling of the two monomeric naphthol units in perylenequinone biosynthesis is catalyzed by the FAD-dependent monooxygenase elcE and the multicopper oxidase elcG. ElcG might catalyze the first intermolecular coupling in a regio- and stereo-selective manner via a phenol radical coupling mechanism and the elcE could forge the second C-C bond intramolecularly via a hydride transfer mechanism. The fasciclin domain-containing protein elcF might also play a role duting this step. The last piece of the puzzle in the biosynthesis of elsinochrome C is the additional annulation by enolate coupling to afford the dihydrobenzo(ghi)perylenequinone system, catalyzed by the FAD-dependent monooxygenase elcH. This Phaeosphaeria nodorum (strain SN15 / ATCC MYA-4574 / FGSC 10173) (Glume blotch fungus) protein is Fasciclin-like arabinogalactan protein elcF.